A 335-amino-acid polypeptide reads, in one-letter code: tRNA N6-adenosine threonylcarbamoyltransferase (335 aa).

Positions 111, 115, and 132 each coordinate Fe cation. Substrate is bound by residues 132-136 (YVSGG), D164, G177, E181, and N260. D288 contacts Fe cation.

It belongs to the KAE1 / TsaD family. Monomer. Component of the KEOPS complex that consists of Kae1, Bud32, Cgi121 and Pcc1; the whole complex dimerizes. It depends on Fe(2+) as a cofactor.

The protein resides in the cytoplasm. It catalyses the reaction L-threonylcarbamoyladenylate + adenosine(37) in tRNA = N(6)-L-threonylcarbamoyladenosine(37) in tRNA + AMP + H(+). Required for the formation of a threonylcarbamoyl group on adenosine at position 37 (t(6)A37) in tRNAs that read codons beginning with adenine. Is a component of the KEOPS complex that is probably involved in the transfer of the threonylcarbamoyl moiety of threonylcarbamoyl-AMP (TC-AMP) to the N6 group of A37. Kae1 likely plays a direct catalytic role in this reaction, but requires other protein(s) of the complex to fulfill this activity. This is tRNA N6-adenosine threonylcarbamoyltransferase from Methanococcoides burtonii (strain DSM 6242 / NBRC 107633 / OCM 468 / ACE-M).